Here is a 264-residue protein sequence, read N- to C-terminus: S-adenosylmethionine decarboxylase proenzyme (264 aa).

The active-site Schiff-base intermediate with substrate; via pyruvic acid is Ser113. Ser113 is modified (pyruvic acid (Ser); by autocatalysis). The active-site Proton acceptor; for processing activity is His118. The active-site Proton donor; for catalytic activity is Cys141.

This sequence belongs to the prokaryotic AdoMetDC family. Type 2 subfamily. In terms of assembly, heterooctamer of four alpha and four beta chains arranged as a tetramer of alpha/beta heterodimers. Pyruvate serves as cofactor. Is synthesized initially as an inactive proenzyme. Formation of the active enzyme involves a self-maturation process in which the active site pyruvoyl group is generated from an internal serine residue via an autocatalytic post-translational modification. Two non-identical subunits are generated from the proenzyme in this reaction, and the pyruvate is formed at the N-terminus of the alpha chain, which is derived from the carboxyl end of the proenzyme. The post-translation cleavage follows an unusual pathway, termed non-hydrolytic serinolysis, in which the side chain hydroxyl group of the serine supplies its oxygen atom to form the C-terminus of the beta chain, while the remainder of the serine residue undergoes an oxidative deamination to produce ammonia and the pyruvoyl group blocking the N-terminus of the alpha chain.

It catalyses the reaction S-adenosyl-L-methionine + H(+) = S-adenosyl 3-(methylsulfanyl)propylamine + CO2. The protein operates within amine and polyamine biosynthesis; S-adenosylmethioninamine biosynthesis; S-adenosylmethioninamine from S-adenosyl-L-methionine: step 1/1. Catalyzes the decarboxylation of S-adenosylmethionine to S-adenosylmethioninamine (dcAdoMet), the propylamine donor required for the synthesis of the polyamines spermine and spermidine from the diamine putrescine. The chain is S-adenosylmethionine decarboxylase proenzyme from Pseudomonas aeruginosa (strain ATCC 15692 / DSM 22644 / CIP 104116 / JCM 14847 / LMG 12228 / 1C / PRS 101 / PAO1).